The following is a 325-amino-acid chain: Glutarate 2-hydroxylase (325 aa).

3 residues coordinate Fe cation: His160, Asp162, and His292.

Belongs to the glutarate hydroxylase family. As to quaternary structure, homotetramer. Fe(2+) is required as a cofactor.

The catalysed reaction is glutarate + 2-oxoglutarate + O2 = (S)-2-hydroxyglutarate + succinate + CO2. The protein operates within amino-acid degradation. In terms of biological role, acts as an alpha-ketoglutarate-dependent dioxygenase catalyzing hydroxylation of glutarate (GA) to L-2-hydroxyglutarate (L2HG). Functions in a L-lysine degradation pathway that proceeds via cadaverine, glutarate and L-2-hydroxyglutarate. In Citrobacter koseri (strain ATCC BAA-895 / CDC 4225-83 / SGSC4696), this protein is Glutarate 2-hydroxylase.